The sequence spans 246 residues: UL16-binding protein 6 (246 aa).

An N-terminal signal peptide occupies residues 1–25 (MAAAAIPALLLCLPLLFLLFGWSRA). Residues 29 to 117 (DPHSLCYDIT…IQLENYTPKE (89 aa)) are MHC class I alpha-1 like. An intrachain disulfide couples Cys50 to Cys66. N-linked (GlcNAc...) asparagine glycans are attached at residues Asn68 and Asn82. An MHC class I alpha-2 like region spans residues 118–210 (PLTLQARMSC…MDSTLEPSAG (93 aa)). A disulfide bridge links Cys127 with Cys190. A lipid anchor (GPI-anchor amidated glycine) is attached at Gly218. Residues 219-246 (TTQLRATATTLILCCLLIILPCFILPGI) constitute a propeptide, removed in mature form.

It belongs to the MHC class I family. In terms of assembly, interacts with KLRK1/NKG2D. As to quaternary structure, (Microbial infection) In CMV-infected cells, interacts with the viral glycoprotein UL16; this interaction causes relocalization from the cell surface to the cytoplasm and prevents binding to and activation of KLRK1/NKG2D, providing CMV with an immune evasion mechanism. As to expression, widely expressed. Expressed in trachea. Constitutively expressed in peripheral blood mononuclear cells, including B-cells and natural killer cells, as well as CD4+ and CD8+ T-cells and monocytes. Tends to be up-regulated in various lymphoid malignancies, including chronic lymphocytic leukemia.

It localises to the cell membrane. It is found in the endoplasmic reticulum. Functionally, binds and activates the KLRK1/NKG2D receptor, mediating natural killer cell cytotoxicity. The sequence is that of UL16-binding protein 6 (RAET1L) from Homo sapiens (Human).